The sequence spans 152 residues: UPF0225 protein YchJ (152 aa).

The protein belongs to the UPF0225 family.

This chain is UPF0225 protein YchJ, found in Escherichia coli O81 (strain ED1a).